Here is a 531-residue protein sequence, read N- to C-terminus: Zinc finger CCCH-type with G patch domain-containing protein (531 aa).

An N-acetylmethionine modification is found at Met-1. Positions 91–133 are disordered; that stretch reads EAPAAARGSGSETVPKAEAGPESAAGGQEEEEGEDEEELSGTK. The span at 107 to 117 shows a compositional bias: low complexity; that stretch reads AEAGPESAAGG. A compositionally biased stretch (acidic residues) spans 118–129; sequence QEEEEGEDEEEL. Residues 175 to 201 form a C3H1-type zinc finger; the sequence is KSLKPCPFFLEGKCRFKENCRFSHGQV. The disordered stretch occupies residues 267–289; it reads PPLRTEATESDSDSDGTGDSSYA. The G-patch domain maps to 333 to 379; sequence TRGIGSRLLTKMGYEFGKGLGRHAEGRVEPIHAVVLPRGKSLDQCVE. Ser-373 carries the post-translational modification Phosphoserine. Disordered stretches follow at residues 385–409, 426–446, and 509–531; these read TRVG…GGRP, APGA…DMYH, and RAQE…MTEF. Residues 426–438 show a composition bias toward low complexity; sequence APGALEAGAAPAG. Over residues 518–531 the composition is skewed to basic and acidic residues; that stretch reads EQRKADTHKKMTEF.

In terms of assembly, interacts with CHD4/Mi-2; the interaction is direct. Ubiquitinated in case of infection by HIV-1, leading to its degradation. Ubiquitination is mediated by the CUL4A-RBX1-DDB1-DCAF1/VPRBP complex that is hijacked by HIV-1 via interaction between HIV-1 Vpr and DCAF1/VPRBP. Widely expressed.

The protein localises to the nucleus. In terms of biological role, transcription repressor that specifically binds the 5'-GGAG[GA]A[GA]A-3' consensus sequence. Represses transcription by recruiting the chromatin multiprotein complex NuRD to target promoters. Negatively regulates expression of EGFR, a gene involved in cell proliferation, survival and migration. Its ability to repress genes of the EGFR pathway suggest it may act as a tumor suppressor. Able to suppress breast carcinogenesis. Antagonizes the transcription repression by isoform 1 by competing for the binding of the NuRD complex. Does not bind DNA. The chain is Zinc finger CCCH-type with G patch domain-containing protein (ZGPAT) from Homo sapiens (Human).